A 908-amino-acid polypeptide reads, in one-letter code: Protein translocase subunit SecA (908 aa).

ATP-binding positions include Gln87, 105-109 (GEGKT), and Asp512. The disordered stretch occupies residues 865–908 (GGDDGSDEMMAHTPMIRDGDKVGRNDPCPCGSGRKYKQCHGKLS). Positions 879 to 888 (MIRDGDKVGR) are enriched in basic and acidic residues. Zn(2+) is bound by residues Cys892, Cys894, Cys903, and His904. Over residues 898-908 (RKYKQCHGKLS) the composition is skewed to basic residues.

Belongs to the SecA family. As to quaternary structure, monomer and homodimer. Part of the essential Sec protein translocation apparatus which comprises SecA, SecYEG and auxiliary proteins SecDF-YajC and YidC. It depends on Zn(2+) as a cofactor.

It localises to the cell inner membrane. The protein resides in the cytoplasm. The enzyme catalyses ATP + H2O + cellular proteinSide 1 = ADP + phosphate + cellular proteinSide 2.. Part of the Sec protein translocase complex. Interacts with the SecYEG preprotein conducting channel. Has a central role in coupling the hydrolysis of ATP to the transfer of proteins into and across the cell membrane, serving both as a receptor for the preprotein-SecB complex and as an ATP-driven molecular motor driving the stepwise translocation of polypeptide chains across the membrane. The polypeptide is Protein translocase subunit SecA (Shewanella sp. (strain ANA-3)).